A 584-amino-acid chain; its full sequence is Arginine--tRNA ligase (584 aa).

The short motif at 127-137 (PNLAKEMHVGH) is the 'HIGH' region element.

Belongs to the class-I aminoacyl-tRNA synthetase family. In terms of assembly, monomer.

The protein resides in the cytoplasm. It carries out the reaction tRNA(Arg) + L-arginine + ATP = L-arginyl-tRNA(Arg) + AMP + diphosphate. This is Arginine--tRNA ligase from Alcanivorax borkumensis (strain ATCC 700651 / DSM 11573 / NCIMB 13689 / SK2).